The chain runs to 482 residues: Aspartyl/glutamyl-tRNA(Asn/Gln) amidotransferase subunit B (482 aa).

The protein belongs to the GatB/GatE family. GatB subfamily. In terms of assembly, heterotrimer of A, B and C subunits.

It catalyses the reaction L-glutamyl-tRNA(Gln) + L-glutamine + ATP + H2O = L-glutaminyl-tRNA(Gln) + L-glutamate + ADP + phosphate + H(+). The enzyme catalyses L-aspartyl-tRNA(Asn) + L-glutamine + ATP + H2O = L-asparaginyl-tRNA(Asn) + L-glutamate + ADP + phosphate + 2 H(+). Functionally, allows the formation of correctly charged Asn-tRNA(Asn) or Gln-tRNA(Gln) through the transamidation of misacylated Asp-tRNA(Asn) or Glu-tRNA(Gln) in organisms which lack either or both of asparaginyl-tRNA or glutaminyl-tRNA synthetases. The reaction takes place in the presence of glutamine and ATP through an activated phospho-Asp-tRNA(Asn) or phospho-Glu-tRNA(Gln). The polypeptide is Aspartyl/glutamyl-tRNA(Asn/Gln) amidotransferase subunit B (Thermotoga petrophila (strain ATCC BAA-488 / DSM 13995 / JCM 10881 / RKU-1)).